A 470-amino-acid polypeptide reads, in one-letter code: Ribulose bisphosphate carboxylase large chain (470 aa).

The substrate site is built by asparagine 115 and threonine 165. Residue lysine 167 is the Proton acceptor of the active site. Position 169 (lysine 169) interacts with substrate. Lysine 193, aspartate 195, and glutamate 196 together coordinate Mg(2+). The residue at position 193 (lysine 193) is an N6-carboxylysine. The active-site Proton acceptor is the histidine 286. Substrate-binding residues include arginine 287, histidine 319, and serine 371.

Belongs to the RuBisCO large chain family. Type I subfamily. In terms of assembly, heterohexadecamer of 8 large chains and 8 small chains. Mg(2+) is required as a cofactor.

It localises to the carboxysome. It carries out the reaction 2 (2R)-3-phosphoglycerate + 2 H(+) = D-ribulose 1,5-bisphosphate + CO2 + H2O. The catalysed reaction is D-ribulose 1,5-bisphosphate + O2 = 2-phosphoglycolate + (2R)-3-phosphoglycerate + 2 H(+). RuBisCO catalyzes two reactions: the carboxylation of D-ribulose 1,5-bisphosphate, the primary event in carbon dioxide fixation, as well as the oxidative fragmentation of the pentose substrate in the photorespiration process. Both reactions occur simultaneously and in competition at the same active site. In Synechococcus sp. (strain CC9311), this protein is Ribulose bisphosphate carboxylase large chain.